We begin with the raw amino-acid sequence, 194 residues long: MRKAERARKTNETDIKLSFHIDGEGKADIQTDVPFMTHMLDLFTKHGQFDLSIEAKGDVEIDDHHTTEDIGICLGQALLEALGDKQGIKRYGSSMVPMDEALAQVAIDLSNRPHLEFRAEFPSRKIGTFDTELVHEFLWKFALEARMNLHVIVHYGTNTHHMIEAIFKALGRALDEAALIDPRVKGIPSTKGML.

It belongs to the imidazoleglycerol-phosphate dehydratase family.

It is found in the cytoplasm. It carries out the reaction D-erythro-1-(imidazol-4-yl)glycerol 3-phosphate = 3-(imidazol-4-yl)-2-oxopropyl phosphate + H2O. It participates in amino-acid biosynthesis; L-histidine biosynthesis; L-histidine from 5-phospho-alpha-D-ribose 1-diphosphate: step 6/9. This chain is Imidazoleglycerol-phosphate dehydratase, found in Bacillus licheniformis (strain ATCC 14580 / DSM 13 / JCM 2505 / CCUG 7422 / NBRC 12200 / NCIMB 9375 / NCTC 10341 / NRRL NRS-1264 / Gibson 46).